The following is a 448-amino-acid chain: N-succinylarginine dihydrolase (448 aa).

Residues 19-28, Asn110, and 137-138 each bind substrate; these read GGLSYGNVAS and HR. Glu174 is an active-site residue. Arg214 contacts substrate. His250 is a catalytic residue. Substrate is bound by residues Asp252 and Asn365. Cys371 functions as the Nucleophile in the catalytic mechanism.

The protein belongs to the succinylarginine dihydrolase family. As to quaternary structure, homodimer.

The enzyme catalyses N(2)-succinyl-L-arginine + 2 H2O + 2 H(+) = N(2)-succinyl-L-ornithine + 2 NH4(+) + CO2. It functions in the pathway amino-acid degradation; L-arginine degradation via AST pathway; L-glutamate and succinate from L-arginine: step 2/5. Its function is as follows. Catalyzes the hydrolysis of N(2)-succinylarginine into N(2)-succinylornithine, ammonia and CO(2). The protein is N-succinylarginine dihydrolase of Pseudomonas fluorescens (strain SBW25).